The following is a 142-amino-acid chain: uncharacterized protein (142 aa).

The Cytoplasmic portion of the chain corresponds to 1–9 (MDMVSPVLN). A helical transmembrane segment spans residues 10-30 (LQSSILGELVGIIGKVFFLLI). Topologically, residues 31–41 (EEIKYPIITPK) are extracellular. A helical membrane pass occupies residues 42–62 (IIVDAQISSWSLFFFASICNL). At 63-101 (SAKFREPIVTTSSIISLMESEKDLKNVNEYFQIMAKMLF) the chain is on the cytoplasmic side. A helical membrane pass occupies residues 102–122 (ILENKIVVSLFVVFNISVLII). At 123 to 142 (VKSEPYSYGKVLFKPSSSIF) the chain is on the extracellular side.

The protein resides in the membrane. This is an uncharacterized protein from Saccharomyces cerevisiae (strain ATCC 204508 / S288c) (Baker's yeast).